A 568-amino-acid chain; its full sequence is Urease subunit alpha (568 aa).

The region spanning 133 to 568 (GGVDTHIHFI…LPLAQKYFLF (436 aa)) is the Urease domain. 3 residues coordinate Ni(2+): H138, H140, and K221. Residue K221 is modified to N6-carboxylysine. H223 is a substrate binding site. The Ni(2+) site is built by H250 and H276. H324 acts as the Proton donor in catalysis. D364 serves as a coordination point for Ni(2+).

It belongs to the metallo-dependent hydrolases superfamily. Urease alpha subunit family. In terms of assembly, heterohexamer of 3 UreC (alpha) and 3 UreAB (gamma/beta) subunits. It depends on Ni cation as a cofactor. In terms of processing, carboxylation allows a single lysine to coordinate two nickel ions.

Its subcellular location is the cytoplasm. The enzyme catalyses urea + 2 H2O + H(+) = hydrogencarbonate + 2 NH4(+). The protein operates within nitrogen metabolism; urea degradation; CO(2) and NH(3) from urea (urease route): step 1/1. This Deinococcus radiodurans (strain ATCC 13939 / DSM 20539 / JCM 16871 / CCUG 27074 / LMG 4051 / NBRC 15346 / NCIMB 9279 / VKM B-1422 / R1) protein is Urease subunit alpha.